Consider the following 432-residue polypeptide: Phosphomevalonate kinase (432 aa).

ATP is bound by residues Lys-10 and 142 to 148 (VEKTGLG).

Belongs to the GHMP kinase family. Mevalonate kinase subfamily.

It is found in the cytoplasm. It carries out the reaction (R)-5-phosphomevalonate + ATP = (R)-5-diphosphomevalonate + ADP. It participates in isoprenoid biosynthesis; isopentenyl diphosphate biosynthesis via mevalonate pathway; isopentenyl diphosphate from (R)-mevalonate: step 2/3. Its function is as follows. Phosphomevalonate kinase; part of the second module of ergosterol biosynthesis pathway that includes the middle steps of the pathway. ERG8 converts 5-phosphomevalonate to 5-diphosphomevalonate. The second module is carried out in the vacuole and involves the formation of farnesyl diphosphate, which is also an important intermediate in the biosynthesis of ubiquinone, dolichol, heme and prenylated proteins. Activity by the mevalonate kinase ERG12 first converts mevalonate into 5-phosphomevalonate. 5-phosphomevalonate is then further converted to 5-diphosphomevalonate by the phosphomevalonate kinase ERG8. The diphosphomevalonate decarboxylase MVD then produces isopentenyl diphosphate. The isopentenyl-diphosphate delta-isomerase IDI1 then catalyzes the 1,3-allylic rearrangement of the homoallylic substrate isopentenyl (IPP) to its highly electrophilic allylic isomer, dimethylallyl diphosphate (DMAPP). Finally the farnesyl diphosphate synthase ERG20 catalyzes the sequential condensation of isopentenyl pyrophosphate with dimethylallyl pyrophosphate, and then with the resultant geranylpyrophosphate to the ultimate product farnesyl pyrophosphate. In Candida albicans (strain SC5314 / ATCC MYA-2876) (Yeast), this protein is Phosphomevalonate kinase.